Reading from the N-terminus, the 145-residue chain is FAD synthase (145 aa).

ATP contacts are provided by residues 9 to 10 (TF), 14 to 17 (HPGH), aspartate 94, and tyrosine 122.

It belongs to the archaeal FAD synthase family. Homodimer. A divalent metal cation serves as cofactor.

It catalyses the reaction FMN + ATP + H(+) = FAD + diphosphate. It functions in the pathway cofactor biosynthesis; FAD biosynthesis; FAD from FMN: step 1/1. Its function is as follows. Catalyzes the transfer of the AMP portion of ATP to flavin mononucleotide (FMN) to produce flavin adenine dinucleotide (FAD) coenzyme. This Methanocaldococcus infernus (strain DSM 11812 / JCM 15783 / ME) protein is FAD synthase.